The following is a 557-amino-acid chain: Formate--tetrahydrofolate ligase (557 aa).

66–73 (TPAGEGKS) provides a ligand contact to ATP.

It belongs to the formate--tetrahydrofolate ligase family.

It catalyses the reaction (6S)-5,6,7,8-tetrahydrofolate + formate + ATP = (6R)-10-formyltetrahydrofolate + ADP + phosphate. Its pathway is one-carbon metabolism; tetrahydrofolate interconversion. This Clostridium botulinum (strain ATCC 19397 / Type A) protein is Formate--tetrahydrofolate ligase.